A 169-amino-acid polypeptide reads, in one-letter code: Peptide methionine sulfoxide reductase MsrA (169 aa).

Residue Cys10 is part of the active site.

It belongs to the MsrA Met sulfoxide reductase family.

The enzyme catalyses L-methionyl-[protein] + [thioredoxin]-disulfide + H2O = L-methionyl-(S)-S-oxide-[protein] + [thioredoxin]-dithiol. It carries out the reaction [thioredoxin]-disulfide + L-methionine + H2O = L-methionine (S)-S-oxide + [thioredoxin]-dithiol. Functionally, has an important function as a repair enzyme for proteins that have been inactivated by oxidation. Catalyzes the reversible oxidation-reduction of methionine sulfoxide in proteins to methionine. This chain is Peptide methionine sulfoxide reductase MsrA, found in Streptococcus equi subsp. zooepidemicus (strain H70).